Reading from the N-terminus, the 375-residue chain is MEMGSNSGPGHGPGQAESGGSSTESSSFSGGLMFGQKIYFEDGGGGSGSSSSGGRSNRRVRGGGSGQSGQIPRCQVEGCGMDLTNAKGYYSRHRVCGVHSKTPKVTVAGIEQRFCQQCSRFHQLPEFDLEKRSCRRRLAGHNERRRKPQPASLSVLASRYGRIAPSLYENGDAGMNGSFLGNQEIGWPSSRTLDTRVMRRPVSSPSWQINPMNVFSQGSVGGGGTSFSSPEIMDTKLESYKGIGDSNCALSLLSNPHQPHDNNNNNNNNNNNNNNTWRASSGFGPMTVTMAQPPPAPSQHQYLNPPWVFKDNDNDMSPVLNLGRYTEPDNCQISSGTAMGEFELSDHHHQSRRQYMEDENTRAYDSSSHHTNWSL.

2 disordered regions span residues 1 to 30 (MEMG…SFSG) and 43 to 73 (GGGG…QIPR). The segment covering 18 to 30 (SGGSSTESSSFSG) has biased composition (low complexity). The SBP-type zinc-finger motif lies at 71–148 (IPRCQVEGCG…AGHNERRRKP (78 aa)). Residues C74, C79, C96, H99, C115, C118, H122, and C134 each contribute to the Zn(2+) site. The short motif at 131 to 147 (KRSCRRRLAGHNERRRK) is the Bipartite nuclear localization signal element. Disordered regions lie at residues 252-278 (LLSN…NTWR) and 345-375 (SDHH…NWSL). Residues 262–275 (NNNNNNNNNNNNNN) are compositionally biased toward low complexity. Residues 345-362 (SDHHHQSRRQYMEDENTR) are compositionally biased toward basic and acidic residues. Residues 363–375 (AYDSSSHHTNWSL) are compositionally biased toward polar residues.

Zn(2+) is required as a cofactor.

It localises to the nucleus. It is found in the cytoplasm. In terms of biological role, trans-acting factor that binds specifically to the consensus nucleotide sequence 5'-TNCGTACAA-3'. The polypeptide is Squamosa promoter-binding-like protein 9 (SPL9) (Arabidopsis thaliana (Mouse-ear cress)).